Reading from the N-terminus, the 296-residue chain is GTPase Era (296 aa).

The 168-residue stretch at 3 to 170 folds into the Era-type G domain; the sequence is KSGFITIVGR…LELMVKYLPE (168 aa). Residues 11–18 form a G1 region; that stretch reads GRPNVGKS. Residue 11–18 participates in GTP binding; that stretch reads GRPNVGKS. The G2 stretch occupies residues 37–41; sequence QTTRN. The segment at 58 to 61 is G3; sequence DTPG. GTP contacts are provided by residues 58–62 and 120–123; these read DTPGI and NKVD. Residues 120-123 form a G4 region; that stretch reads NKVD. The tract at residues 149–151 is G5; sequence ISA. Residues 201-278 form the KH type-2 domain; sequence LSQEVPHGIA…NIKIWVKVRK (78 aa).

This sequence belongs to the TRAFAC class TrmE-Era-EngA-EngB-Septin-like GTPase superfamily. Era GTPase family. In terms of assembly, monomer.

It localises to the cytoplasm. The protein localises to the cell membrane. In terms of biological role, an essential GTPase that binds both GDP and GTP, with rapid nucleotide exchange. Plays a role in 16S rRNA processing and 30S ribosomal subunit biogenesis and possibly also in cell cycle regulation and energy metabolism. The sequence is that of GTPase Era from Clostridium perfringens (strain ATCC 13124 / DSM 756 / JCM 1290 / NCIMB 6125 / NCTC 8237 / Type A).